The following is a 427-amino-acid chain: Enolase (427 aa).

Gln-162 is a binding site for (2R)-2-phosphoglycerate. Glu-204 serves as the catalytic Proton donor. The Mg(2+) site is built by Asp-241, Glu-282, and Asp-309. Residues Lys-334, Arg-363, Ser-364, and Lys-385 each contribute to the (2R)-2-phosphoglycerate site. Lys-334 functions as the Proton acceptor in the catalytic mechanism.

The protein belongs to the enolase family. It depends on Mg(2+) as a cofactor.

The protein localises to the cytoplasm. Its subcellular location is the secreted. It is found in the cell surface. The catalysed reaction is (2R)-2-phosphoglycerate = phosphoenolpyruvate + H2O. The protein operates within carbohydrate degradation; glycolysis; pyruvate from D-glyceraldehyde 3-phosphate: step 4/5. Catalyzes the reversible conversion of 2-phosphoglycerate (2-PG) into phosphoenolpyruvate (PEP). It is essential for the degradation of carbohydrates via glycolysis. This is Enolase from Parafrankia sp. (strain EAN1pec).